The sequence spans 961 residues: DNA repair endonuclease XPF (961 aa).

Disordered stretches follow at residues 1–27, 451–485, and 674–693; these read MADS…SADT, NYAK…PPLA, and PTDE…QATK. The segment covering 13–22 has biased composition (basic and acidic residues); it reads TENERPKEVE. The span at 458-469 shows a compositional bias: polar residues; the sequence is TRSAPPKNVSSN. In terms of domain architecture, ERCC4 spans 697–777; it reads KVIVDMREFR…KPILLIEFDQ (81 aa).

The protein belongs to the XPF family. As to quaternary structure, heterodimer. Interacts with hdm.

The protein localises to the nucleus. Functionally, implicated in recombination events during meiosis, mostly in meiotic exchange. May directly resolve Holliday junctions within recombination intermediates leading to DNA exchange. Also required for the repair of mismatches within meiotic heteroduplex DNA and for nucleotide excision repair. The sequence is that of DNA repair endonuclease XPF (mei-9) from Drosophila melanogaster (Fruit fly).